The following is a 393-amino-acid chain: S-adenosylmethionine synthase (393 aa).

Glu-9 is a Mg(2+) binding site. An ATP-binding site is contributed by His-15. Glu-43 contacts K(+). Residues Glu-56 and Gln-99 each coordinate L-methionine. ATP is bound by residues His-167 to Lys-169, Ser-235 to Phe-238, Asp-246, Arg-252 to Lys-253, Ala-269, Lys-273, and Lys-277. Asp-246 serves as a coordination point for L-methionine. Lys-277 is a binding site for L-methionine.

This sequence belongs to the AdoMet synthase family. Homotetramer. It depends on Mn(2+) as a cofactor. Mg(2+) is required as a cofactor. Co(2+) serves as cofactor. Requires K(+) as cofactor. Root.

It localises to the cytoplasm. It catalyses the reaction L-methionine + ATP + H2O = S-adenosyl-L-methionine + phosphate + diphosphate. The protein operates within amino-acid biosynthesis; S-adenosyl-L-methionine biosynthesis; S-adenosyl-L-methionine from L-methionine: step 1/1. Functionally, catalyzes the formation of S-adenosylmethionine from methionine and ATP. The reaction comprises two steps that are both catalyzed by the same enzyme: formation of S-adenosylmethionine (AdoMet) and triphosphate, and subsequent hydrolysis of the triphosphate. This is S-adenosylmethionine synthase (METK) from Pinus banksiana (Jack pine).